The sequence spans 208 residues: N-(5'-phosphoribosyl)anthranilate isomerase (208 aa).

It belongs to the TrpF family.

The enzyme catalyses N-(5-phospho-beta-D-ribosyl)anthranilate = 1-(2-carboxyphenylamino)-1-deoxy-D-ribulose 5-phosphate. It functions in the pathway amino-acid biosynthesis; L-tryptophan biosynthesis; L-tryptophan from chorismate: step 3/5. This Chlamydia trachomatis serovar A (strain ATCC VR-571B / DSM 19440 / HAR-13) protein is N-(5'-phosphoribosyl)anthranilate isomerase.